A 147-amino-acid chain; its full sequence is Angiogenin (147 aa).

Residues 1–24 (MVMGLGVLLLVFVLGLGLTPPTLA) form the signal peptide. At glutamine 25 the chain carries Pyrrolidone carboxylic acid. The Proton acceptor role is filled by histidine 37. TRNA is bound by residues arginine 45 and aspartate 46. Intrachain disulfides connect cysteine 50–cysteine 105, cysteine 63–cysteine 116, and cysteine 81–cysteine 131. A Nucleolar localization signal motif is present at residues 55-59 (RRRGL). 2 residues coordinate tRNA: cysteine 105 and valine 127. Histidine 138 functions as the Proton donor in the catalytic mechanism.

The protein belongs to the pancreatic ribonuclease family. As to quaternary structure, homodimer. Interacts with RNH1; inhibiting ANG ribonuclease activity. Interacts with PCNA.

Its subcellular location is the secreted. It localises to the nucleus. The protein localises to the nucleolus. The protein resides in the cytoplasm. It is found in the stress granule. With respect to regulation, has weak tRNA ribonuclease activity by itself due to partial autoinhibition by its C-terminus, which folds into a short alpha-helix that partially occludes the substrate-binding site. In absence of stress, the ribonuclease activity is inhibited by RNH1 in the cytoplasm. In response to stress, dissociates from RNH1 in the cytoplasm and associates with cytoplasmic ribosomes with vacant A-sites: ribosomes directly activate the tRNA ribonuclease activity of ANG by refolding the C-terminal alpha-helix. In response to stress, the angiogenic activity of ANG is inhibited by RNH1 in the nucleus. Secreted ribonuclease that can either promote or restrict cell proliferation of target cells, depending on the context. Endocytosed in target cells via its receptor PLXNB2 and translocates to the cytoplasm or nucleus. Under stress conditions, localizes to the cytoplasm and promotes the assembly of stress granules (SGs): specifically cleaves a subset of tRNAs within anticodon loops to produce tRNA-derived stress-induced fragments (tiRNAs), resulting in translation repression and inhibition of cell proliferation. tiRNas also prevent formation of apoptosome, thereby promoting cell survival. Preferentially cleaves RNAs between a pyrimidine and an adenosine residue, suggesting that it cleaves the anticodon loop of tRNA(Ala) (32-UUAGCAU-38) after positions 33 and 36. Cleaves a subset of tRNAs, including tRNA(Ala), tRNA(Glu), tRNA(Gly), tRNA(Lys), tRNA(Val), tRNA(His), tRNA(Asp) and tRNA(Sec). Under growth conditions and in differentiated cells, translocates to the nucleus and stimulates ribosomal RNA (rRNA) transcription, including that containing the initiation site sequences of 45S rRNA, thereby promoting cell growth and proliferation. Angiogenin induces vascularization of normal and malignant tissues via its ability to promote rRNA transcription. Involved in hematopoietic stem and progenitor cell (HSPC) growth and survival by promoting rRNA transcription in growth conditions and inhibiting translation in response to stress, respectively. Mediates the crosstalk between myeloid and intestinal epithelial cells to protect the intestinal epithelial barrier integrity: secreted by myeloid cells and promotes intestinal epithelial cells proliferation and survival. Also mediates osteoclast-endothelial cell crosstalk in growing bone: produced by osteoclasts and protects the neighboring vascular cells against senescence by promoting rRNA transcription. The polypeptide is Angiogenin (ANG) (Gorilla gorilla gorilla (Western lowland gorilla)).